The following is a 141-amino-acid chain: Putative pre-16S rRNA nuclease (141 aa).

It belongs to the YqgF nuclease family.

The protein resides in the cytoplasm. Could be a nuclease involved in processing of the 5'-end of pre-16S rRNA. The chain is Putative pre-16S rRNA nuclease from Roseiflexus sp. (strain RS-1).